Here is a 313-residue protein sequence, read N- to C-terminus: Ribosomal RNA small subunit methyltransferase H (313 aa).

S-adenosyl-L-methionine contacts are provided by residues 35 to 37 (GGH), D55, F79, D101, and Q108.

It belongs to the methyltransferase superfamily. RsmH family.

It localises to the cytoplasm. The catalysed reaction is cytidine(1402) in 16S rRNA + S-adenosyl-L-methionine = N(4)-methylcytidine(1402) in 16S rRNA + S-adenosyl-L-homocysteine + H(+). Specifically methylates the N4 position of cytidine in position 1402 (C1402) of 16S rRNA. The polypeptide is Ribosomal RNA small subunit methyltransferase H (Salmonella agona (strain SL483)).